Consider the following 616-residue polypeptide: Probable Xaa-Pro aminopeptidase P (616 aa).

Mn(2+)-binding residues include Asp-413, Asp-424, Glu-522, and Glu-536.

The protein belongs to the peptidase M24B family. It depends on Mn(2+) as a cofactor.

The catalysed reaction is Release of any N-terminal amino acid, including proline, that is linked to proline, even from a dipeptide or tripeptide.. Catalyzes the removal of a penultimate prolyl residue from the N-termini of peptides. The polypeptide is Probable Xaa-Pro aminopeptidase P (AMPP) (Paracoccidioides brasiliensis (strain Pb03)).